The chain runs to 199 residues: Recombination protein RecR (199 aa).

Residues 57–72 (CSICGNITESDPCEIC) form a C4-type zinc finger. Positions 80 to 176 (STIMVVEQPK…KVTRLAAGLA (97 aa)) constitute a Toprim domain.

This sequence belongs to the RecR family.

In terms of biological role, may play a role in DNA repair. It seems to be involved in an RecBC-independent recombinational process of DNA repair. It may act with RecF and RecO. The chain is Recombination protein RecR from Lactobacillus johnsonii (strain CNCM I-12250 / La1 / NCC 533).